Consider the following 135-residue polypeptide: NADPH-dependent 7-cyano-7-deazaguanine reductase (135 aa).

The active-site Thioimide intermediate is the Cys48. Asp55 serves as the catalytic Proton donor. Substrate contacts are provided by residues 70 to 72 (IEL) and 89 to 90 (HE).

It belongs to the GTP cyclohydrolase I family. QueF type 1 subfamily.

It is found in the cytoplasm. It carries out the reaction 7-aminomethyl-7-carbaguanine + 2 NADP(+) = 7-cyano-7-deazaguanine + 2 NADPH + 3 H(+). It functions in the pathway tRNA modification; tRNA-queuosine biosynthesis. Its function is as follows. Catalyzes the NADPH-dependent reduction of 7-cyano-7-deazaguanine (preQ0) to 7-aminomethyl-7-deazaguanine (preQ1). This Prochlorococcus marinus (strain MIT 9303) protein is NADPH-dependent 7-cyano-7-deazaguanine reductase.